The sequence spans 65 residues: Protein C13 (65 aa).

Belongs to the poxviridae C13 protein family.

This is Protein C13 from Vaccinia virus (strain Copenhagen) (VACV).